A 3259-amino-acid polypeptide reads, in one-letter code: Golgin subfamily B member 1 (3259 aa).

Methionine 1 carries the post-translational modification N-acetylmethionine. The Cytoplasmic portion of the chain corresponds to methionine 1–arginine 3235. Phosphoserine is present on residues serine 6, serine 17, serine 138, and serine 528. The stretch at glutamate 48–leucine 593 forms a coiled coil. A disordered region spans residues glycine 119 to glutamate 142. Residues glutamine 131–glutamate 142 show a composition bias toward basic and acidic residues. Positions leucine 624 to isoleucine 652 are disordered. The segment covering valine 635–glutamate 650 has biased composition (basic and acidic residues). Serine 653 carries the post-translational modification Phosphoserine. Coiled-coil stretches lie at residues aspartate 677–proline 1028, leucine 1062–aspartate 1245, and glycine 1301–histidine 1779. The disordered stretch occupies residues alanine 944 to tyrosine 963. Positions serine 1747–isoleucine 1763 are enriched in basic and acidic residues. Positions serine 1747–phenylalanine 1829 are disordered. 2 stretches are compositionally biased toward polar residues: residues glutamine 1782–proline 1794 and serine 1802–serine 1820. A coiled-coil region spans residues aspartate 1828 to glutamate 3185. Serine 2216, serine 2735, serine 2872, and serine 2884 each carry phosphoserine. The interval arginine 2856 to valine 2876 is disordered. The segment covering serine 2865–glutamate 2875 has biased composition (polar residues). The tract at residues threonine 2998–glutamine 3021 is disordered. Serine 3037 bears the Phosphoserine mark. The interval isoleucine 3107 to glutamine 3140 is disordered. A compositionally biased stretch (basic and acidic residues) spans asparagine 3118–glutamate 3131. The helical transmembrane segment at valine 3236–threonine 3256 threads the bilayer. Topologically, residues glycine 3257 to leucine 3259 are lumenal.

In terms of assembly, homodimer; disulfide-linked. Interacts with PLK3.

Its subcellular location is the golgi apparatus membrane. Functionally, may participate in forming intercisternal cross-bridges of the Golgi complex. This is Golgin subfamily B member 1 (GOLGB1) from Homo sapiens (Human).